A 205-amino-acid polypeptide reads, in one-letter code: Guanylate kinase (205 aa).

In terms of domain architecture, Guanylate kinase-like spans 3 to 181 (GSLYIISAPS…ALSELHSIFL (179 aa)). 10–17 (APSGAGKT) serves as a coordination point for ATP.

This sequence belongs to the guanylate kinase family.

It is found in the cytoplasm. The enzyme catalyses GMP + ATP = GDP + ADP. Essential for recycling GMP and indirectly, cGMP. The polypeptide is Guanylate kinase (Hydrogenovibrio crunogenus (strain DSM 25203 / XCL-2) (Thiomicrospira crunogena)).